The sequence spans 746 residues: Catalase-peroxidase (746 aa).

The span at 1-20 (MSSDTSSSRPPQPDSGTASK) shows a compositional bias: polar residues. The interval 1–42 (MSSDTSSSRPPQPDSGTASKSESENPAIPSPKPKAHAPLTNR) is disordered. A cross-link (tryptophyl-tyrosyl-methioninium (Trp-Tyr) (with M-262)) is located at residues 113–236 (WHAAGTYRIH…YGATTMGLIY (124 aa)). The active-site Proton acceptor is the His114. Residues 236-262 (YVNPEGPEGKPDPIAAAIDIRETFGRM) constitute a cross-link (tryptophyl-tyrosyl-methioninium (Tyr-Met) (with W-113)). Residue His277 coordinates heme b.

This sequence belongs to the peroxidase family. Peroxidase/catalase subfamily. In terms of assembly, homodimer or homotetramer. Requires heme b as cofactor. In terms of processing, formation of the three residue Trp-Tyr-Met cross-link is important for the catalase, but not the peroxidase activity of the enzyme.

The enzyme catalyses H2O2 + AH2 = A + 2 H2O. It catalyses the reaction 2 H2O2 = O2 + 2 H2O. In terms of biological role, bifunctional enzyme with both catalase and broad-spectrum peroxidase activity. May play a role in the intracellular survival of mycobacteria. This Mycobacterium intracellulare protein is Catalase-peroxidase.